The primary structure comprises 106 residues: Hydrogenase expression/formation protein HoxL (106 aa).

It belongs to the HupF/HypC family.

The sequence is that of Hydrogenase expression/formation protein HoxL (hoxL) from Azotobacter vinelandii.